Consider the following 372-residue polypeptide: 4-hydroxy-3-methylbut-2-en-1-yl diphosphate synthase (flavodoxin) (372 aa).

4 residues coordinate [4Fe-4S] cluster: Cys270, Cys273, Cys305, and Glu312.

This sequence belongs to the IspG family. The cofactor is [4Fe-4S] cluster.

The enzyme catalyses (2E)-4-hydroxy-3-methylbut-2-enyl diphosphate + oxidized [flavodoxin] + H2O + 2 H(+) = 2-C-methyl-D-erythritol 2,4-cyclic diphosphate + reduced [flavodoxin]. The protein operates within isoprenoid biosynthesis; isopentenyl diphosphate biosynthesis via DXP pathway; isopentenyl diphosphate from 1-deoxy-D-xylulose 5-phosphate: step 5/6. Its function is as follows. Converts 2C-methyl-D-erythritol 2,4-cyclodiphosphate (ME-2,4cPP) into 1-hydroxy-2-methyl-2-(E)-butenyl 4-diphosphate. This Shewanella amazonensis (strain ATCC BAA-1098 / SB2B) protein is 4-hydroxy-3-methylbut-2-en-1-yl diphosphate synthase (flavodoxin).